The sequence spans 94 residues: Protein RESPONSE TO LOW SULFUR 2 (94 aa).

The stretch at 15–63 (VDELRRKNGEMEKAVEEMKKEMLQLWRRTQVAEEAEERLCSQLAELEAE) forms a coiled coil.

May be involved in defense responses monitoring. Probably implicated into osmotic stress signaling. The protein is Protein RESPONSE TO LOW SULFUR 2 of Arabidopsis thaliana (Mouse-ear cress).